The following is a 142-amino-acid chain: Large ribosomal subunit protein uL13 (142 aa).

Belongs to the universal ribosomal protein uL13 family. In terms of assembly, part of the 50S ribosomal subunit.

Its function is as follows. This protein is one of the early assembly proteins of the 50S ribosomal subunit, although it is not seen to bind rRNA by itself. It is important during the early stages of 50S assembly. The sequence is that of Large ribosomal subunit protein uL13 from Psychrobacter arcticus (strain DSM 17307 / VKM B-2377 / 273-4).